A 398-amino-acid polypeptide reads, in one-letter code: uncharacterized protein (398 aa).

It belongs to the glycosyltransferase 2 family.

This is an uncharacterized protein from Escherichia coli (strain K12).